A 473-amino-acid chain; its full sequence is Photosystem II CP43 reaction center protein (473 aa).

Positions 1–14 (MKTLYSLRRYYPVE) are excised as a propeptide. T15 bears the N-acetylthreonine mark. At T15 the chain carries Phosphothreonine. Helical transmembrane passes span 69-93 (LFEV…PHLA), 134-155 (LIGP…KDKN), 178-200 (KASF…REIT), 255-275 (KPFA…LSYS), and 291-312 (WFNN…ASQA). Residue E367 participates in [CaMn4O5] cluster binding. The helical transmembrane segment at 447 to 471 (RARAAAAGFEKGIDRDSEPVLSMTP) threads the bilayer.

This sequence belongs to the PsbB/PsbC family. PsbC subfamily. In terms of assembly, PSII is composed of 1 copy each of membrane proteins PsbA, PsbB, PsbC, PsbD, PsbE, PsbF, PsbH, PsbI, PsbJ, PsbK, PsbL, PsbM, PsbT, PsbX, PsbY, PsbZ, Psb30/Ycf12, at least 3 peripheral proteins of the oxygen-evolving complex and a large number of cofactors. It forms dimeric complexes. Binds multiple chlorophylls and provides some of the ligands for the Ca-4Mn-5O cluster of the oxygen-evolving complex. It may also provide a ligand for a Cl- that is required for oxygen evolution. PSII binds additional chlorophylls, carotenoids and specific lipids. serves as cofactor.

Its subcellular location is the plastid. It is found in the chloroplast thylakoid membrane. One of the components of the core complex of photosystem II (PSII). It binds chlorophyll and helps catalyze the primary light-induced photochemical processes of PSII. PSII is a light-driven water:plastoquinone oxidoreductase, using light energy to abstract electrons from H(2)O, generating O(2) and a proton gradient subsequently used for ATP formation. The protein is Photosystem II CP43 reaction center protein of Anthoceros angustus (Hornwort).